Consider the following 438-residue polypeptide: Thymidine phosphorylase (438 aa).

It belongs to the thymidine/pyrimidine-nucleoside phosphorylase family. As to quaternary structure, homodimer.

It carries out the reaction thymidine + phosphate = 2-deoxy-alpha-D-ribose 1-phosphate + thymine. Its pathway is pyrimidine metabolism; dTMP biosynthesis via salvage pathway; dTMP from thymine: step 1/2. The enzymes which catalyze the reversible phosphorolysis of pyrimidine nucleosides are involved in the degradation of these compounds and in their utilization as carbon and energy sources, or in the rescue of pyrimidine bases for nucleotide synthesis. The chain is Thymidine phosphorylase from Agrobacterium fabrum (strain C58 / ATCC 33970) (Agrobacterium tumefaciens (strain C58)).